The primary structure comprises 279 residues: MATHKPINILEAFAAAPPPLDYVLPNMVAGTVGALVSPGGAGKSMLALQLAAQIAGGPDLLEVGELPTGPVIYLPAEDPPTAIHHRLHALGAHLSAEERQAVADGLLIQPLIGSLPNIMAPEWFDGLKRAAEGRRLMVLDTLRRFHIEEENASGPMAQVIGRMEAIAADTGCSIVFLHHASKGAAMMGAGDQQQASRGSSVLVDNIRWQSYLSSMTSAEAEEWGVDDDQRRFFVRFGVSKANYGAPFADRWFRRHDGGVLKPAVLERQRKSKGVPRGEA.

This protein is involved in regulating the plasmid copy-number. Increasing the level of this protein results in a higher plasmid copy-number. The polypeptide is Regulatory protein RepA (repA) (Escherichia coli).